The chain runs to 142 residues: Hemoglobin subunit alpha (142 aa).

The Globin domain occupies valine 2–arginine 142. Residue serine 4 is modified to Phosphoserine. At lysine 8 the chain carries N6-succinyllysine. Threonine 9 carries the post-translational modification Phosphothreonine. Lysine 12 carries the N6-succinyllysine modification. Lysine 17 carries the N6-acetyllysine; alternate modification. Residue lysine 17 is modified to N6-succinyllysine; alternate. The residue at position 25 (tyrosine 25) is a Phosphotyrosine. Serine 36 carries the phosphoserine modification. Lysine 41 carries the post-translational modification N6-succinyllysine. Serine 50 is modified (phosphoserine). Histidine 59 serves as a coordination point for O2. Histidine 88 is a binding site for heme b. Serine 103 carries the phosphoserine modification. Threonine 109 is subject to Phosphothreonine. Phosphoserine is present on residues serine 125 and serine 132. Threonine 135 carries the post-translational modification Phosphothreonine. Serine 139 is modified (phosphoserine).

The protein belongs to the globin family. In terms of assembly, heterotetramer of two alpha chains and two beta chains. As to expression, red blood cells.

In terms of biological role, involved in oxygen transport from the lung to the various peripheral tissues. Hemopressin acts as an antagonist peptide of the cannabinoid receptor CNR1. Hemopressin-binding efficiently blocks cannabinoid receptor CNR1 and subsequent signaling. The polypeptide is Hemoglobin subunit alpha (HBA) (Antrozous pallidus (Pallid bat)).